Here is an 81-residue protein sequence, read N- to C-terminus: uncharacterized protein (81 aa).

This is an uncharacterized protein from Sulfolobus islandicus filamentous virus (isolate Iceland/Hveragerdi) (SIFV).